The primary structure comprises 1334 residues: Rho1 guanine nucleotide exchange factor 1 (1334 aa).

Disordered regions lie at residues 1–89, 135–182, 203–245, and 381–402; these read MDYR…ASPV, PQVS…SDSV, LDQN…TSGT, and SLIN…ASSP. Low complexity predominate over residues 138 to 149; the sequence is SNHAPNNSNSPS. The span at 150 to 164 shows a compositional bias: polar residues; the sequence is LTWHTSSGDDSNQNP. A compositionally biased stretch (low complexity) spans 170 to 180; that stretch reads QSQSSTSPVSD. 3 stretches are compositionally biased toward polar residues: residues 213–227, 234–245, and 381–400; these read VRSS…NSRL, HTVGSHSFTSGT, and SLIN…SEAS. S381 is subject to Phosphoserine. In terms of domain architecture, DH spans 621-808; sequence KRQEVICEVI…RGFLSRLNVE (188 aa). A PH domain is found at 843 to 973; sequence QLIFKGPLKK…WLEHIDNQQT (131 aa). One can recognise a CNH domain in the interval 995-1293; the sequence is DNKVNAIGVY…RLLADGRGKL (299 aa).

The protein localises to the cytoplasm. Stimulates the exchange of Rho1 and Rho5 GDP-bound form into GTP-bound form. Controls septum formation, cell wall synthesis and localization of F-actin patches. Coordinates actin deposition with cell wall biosynthesis during bipolar growth. This chain is Rho1 guanine nucleotide exchange factor 1 (rgf1), found in Schizosaccharomyces pombe (strain 972 / ATCC 24843) (Fission yeast).